The primary structure comprises 612 residues: Elongation factor 4 (612 aa).

The region spanning 11 to 193 (KHIRNFAIVA…KVVKDIPAPS (183 aa)) is the tr-type G domain. GTP-binding positions include 23–28 (DHGKST) and 140–143 (NKID).

It belongs to the TRAFAC class translation factor GTPase superfamily. Classic translation factor GTPase family. LepA subfamily.

Its subcellular location is the cell membrane. It carries out the reaction GTP + H2O = GDP + phosphate + H(+). Functionally, required for accurate and efficient protein synthesis under certain stress conditions. May act as a fidelity factor of the translation reaction, by catalyzing a one-codon backward translocation of tRNAs on improperly translocated ribosomes. Back-translocation proceeds from a post-translocation (POST) complex to a pre-translocation (PRE) complex, thus giving elongation factor G a second chance to translocate the tRNAs correctly. Binds to ribosomes in a GTP-dependent manner. This chain is Elongation factor 4, found in Lactobacillus helveticus (strain DPC 4571).